The primary structure comprises 198 residues: Recombination protein RecR (198 aa).

The segment at 56–71 (CKVCGNFSEEDECVIC) adopts a C4-type zinc-finger fold. Positions 79-174 (GVICVVEEPK…RVSKLASGLP (96 aa)) constitute a Toprim domain.

The protein belongs to the RecR family.

May play a role in DNA repair. It seems to be involved in an RecBC-independent recombinational process of DNA repair. It may act with RecF and RecO. This Tropheryma whipplei (strain TW08/27) (Whipple's bacillus) protein is Recombination protein RecR.